We begin with the raw amino-acid sequence, 267 residues long: NAD kinase 2 (267 aa).

Asp-52 serves as the catalytic Proton acceptor. NAD(+) contacts are provided by residues 52 to 53 (DA), 124 to 125 (NE), Arg-151, Asp-153, 164 to 169 (TAYNKS), and Ala-188.

It belongs to the NAD kinase family. Requires a divalent metal cation as cofactor.

The protein resides in the cytoplasm. The enzyme catalyses NAD(+) + ATP = ADP + NADP(+) + H(+). Involved in the regulation of the intracellular balance of NAD and NADP, and is a key enzyme in the biosynthesis of NADP. Catalyzes specifically the phosphorylation on 2'-hydroxyl of the adenosine moiety of NAD to yield NADP. This Bacillus cereus (strain ATCC 14579 / DSM 31 / CCUG 7414 / JCM 2152 / NBRC 15305 / NCIMB 9373 / NCTC 2599 / NRRL B-3711) protein is NAD kinase 2.